The chain runs to 392 residues: Cell division protein FtsZ (392 aa).

Residues 24–28, 111–113, E142, R145, and D189 contribute to the GTP site; these read GGGCN and GTG.

This sequence belongs to the FtsZ family. In terms of assembly, homodimer. Polymerizes to form a dynamic ring structure in a strictly GTP-dependent manner. Interacts directly with several other division proteins.

The protein localises to the cytoplasm. Essential cell division protein that forms a contractile ring structure (Z ring) at the future cell division site. The regulation of the ring assembly controls the timing and the location of cell division. One of the functions of the FtsZ ring is to recruit other cell division proteins to the septum to produce a new cell wall between the dividing cells. Binds GTP and shows GTPase activity. The protein is Cell division protein FtsZ of Neisseria gonorrhoeae.